We begin with the raw amino-acid sequence, 369 residues long: Anhydro-N-acetylmuramic acid kinase (369 aa).

12-19 is a binding site for ATP; it reads GTSMDGVD.

The protein belongs to the anhydro-N-acetylmuramic acid kinase family.

It catalyses the reaction 1,6-anhydro-N-acetyl-beta-muramate + ATP + H2O = N-acetyl-D-muramate 6-phosphate + ADP + H(+). It participates in amino-sugar metabolism; 1,6-anhydro-N-acetylmuramate degradation. Its pathway is cell wall biogenesis; peptidoglycan recycling. In terms of biological role, catalyzes the specific phosphorylation of 1,6-anhydro-N-acetylmuramic acid (anhMurNAc) with the simultaneous cleavage of the 1,6-anhydro ring, generating MurNAc-6-P. Is required for the utilization of anhMurNAc either imported from the medium or derived from its own cell wall murein, and thus plays a role in cell wall recycling. This chain is Anhydro-N-acetylmuramic acid kinase, found in Shewanella pealeana (strain ATCC 700345 / ANG-SQ1).